The sequence spans 119 residues: Large ribosomal subunit protein bL20 (119 aa).

The protein belongs to the bacterial ribosomal protein bL20 family.

In terms of biological role, binds directly to 23S ribosomal RNA and is necessary for the in vitro assembly process of the 50S ribosomal subunit. It is not involved in the protein synthesizing functions of that subunit. In Streptococcus mutans serotype c (strain ATCC 700610 / UA159), this protein is Large ribosomal subunit protein bL20.